Here is a 188-residue protein sequence, read N- to C-terminus: UPF0157 protein DR_2534 (188 aa).

Positions 1–12 (MGRGGRGVGGGR) are enriched in gly residues. Positions 1–37 (MGRGGRGVGGGRPEGHGASVEGGRTRQTEGMDLISPD) are disordered.

This sequence belongs to the UPF0157 (GrpB) family.

This is UPF0157 protein DR_2534 from Deinococcus radiodurans (strain ATCC 13939 / DSM 20539 / JCM 16871 / CCUG 27074 / LMG 4051 / NBRC 15346 / NCIMB 9279 / VKM B-1422 / R1).